Consider the following 259-residue polypeptide: MTRYRRVVVKLSGRAIAGSAEFGFDSNALEHLAREIIAVRQSGVEVAIVVGGGNLFRGNQSDRWGIDRVEADNIGMLSTVINSLLLRGKLTALGEDNLRVMTAVPVPAVAEPYIRLRAVHLLEKGATVILACGNGQPFLTTDYPAVQRALELNADAVLAAKDGVDGVYDSDPKINPGARLFSHLSYDEVISRGLRVMDQSAFILARDFGMPLHIFDIEQRGAMTAICRGEHRGTVISSSPEKSEEFGNEVLASPAESTA.

Position 10 to 13 (lysine 10 to glycine 13) interacts with ATP. Residue glycine 52 participates in UMP binding. ATP is bound by residues glycine 53 and arginine 57. Residues aspartate 72 and asparagine 134–threonine 141 each bind UMP. ATP-binding residues include tyrosine 168 and aspartate 171. Residues isoleucine 236–alanine 259 are disordered.

Belongs to the UMP kinase family. As to quaternary structure, homohexamer.

Its subcellular location is the cytoplasm. It catalyses the reaction UMP + ATP = UDP + ADP. It participates in pyrimidine metabolism; CTP biosynthesis via de novo pathway; UDP from UMP (UMPK route): step 1/1. Inhibited by UTP. Its function is as follows. Catalyzes the reversible phosphorylation of UMP to UDP. The polypeptide is Uridylate kinase (Frankia casuarinae (strain DSM 45818 / CECT 9043 / HFP020203 / CcI3)).